Consider the following 184-residue polypeptide: Holliday junction branch migration complex subunit RuvA (184 aa).

Residues 1-64 (MIVAVEGIIT…EDADLLYGFL (64 aa)) form a domain I region. The interval 65–145 (DEKEKRMFEM…ANDGEQYKIE (81 aa)) is domain II. Position 145 (Glu145) is a region of interest, flexible linker. The segment at 145–184 (ETISALENLGFKRDKINKILLNCKSTNTADLIKEALKKLA) is domain III.

It belongs to the RuvA family. In terms of assembly, homotetramer. Forms an RuvA(8)-RuvB(12)-Holliday junction (HJ) complex. HJ DNA is sandwiched between 2 RuvA tetramers; dsDNA enters through RuvA and exits via RuvB. An RuvB hexamer assembles on each DNA strand where it exits the tetramer. Each RuvB hexamer is contacted by two RuvA subunits (via domain III) on 2 adjacent RuvB subunits; this complex drives branch migration. In the full resolvosome a probable DNA-RuvA(4)-RuvB(12)-RuvC(2) complex forms which resolves the HJ.

It is found in the cytoplasm. In terms of biological role, the RuvA-RuvB-RuvC complex processes Holliday junction (HJ) DNA during genetic recombination and DNA repair, while the RuvA-RuvB complex plays an important role in the rescue of blocked DNA replication forks via replication fork reversal (RFR). RuvA specifically binds to HJ cruciform DNA, conferring on it an open structure. The RuvB hexamer acts as an ATP-dependent pump, pulling dsDNA into and through the RuvAB complex. HJ branch migration allows RuvC to scan DNA until it finds its consensus sequence, where it cleaves and resolves the cruciform DNA. The sequence is that of Holliday junction branch migration complex subunit RuvA from Campylobacter hominis (strain ATCC BAA-381 / DSM 21671 / CCUG 45161 / LMG 19568 / NCTC 13146 / CH001A).